A 396-amino-acid chain; its full sequence is Phosphoglycerate kinase (396 aa).

Substrate is bound by residues 21-23, Arg-36, 59-62, Arg-114, and Arg-147; these read DIN and HFGR. ATP is bound by residues Lys-197, Glu-319, and 349 to 352; that span reads GGDT.

This sequence belongs to the phosphoglycerate kinase family. As to quaternary structure, monomer.

The protein localises to the cytoplasm. The enzyme catalyses (2R)-3-phosphoglycerate + ATP = (2R)-3-phospho-glyceroyl phosphate + ADP. It functions in the pathway carbohydrate degradation; glycolysis; pyruvate from D-glyceraldehyde 3-phosphate: step 2/5. This is Phosphoglycerate kinase from Jannaschia sp. (strain CCS1).